Here is a 166-residue protein sequence, read N- to C-terminus: V-type proton ATPase subunit c4 (166 aa).

The Lumenal segment spans residues 1–13; it reads MASSGFSGDETAP. The helical transmembrane segment at 14 to 34 threads the bilayer; sequence FFGFLGAAAALVFSCMGAAYG. Residues 35–56 lie on the Cytoplasmic side of the membrane; that stretch reads TAKSGVGVASMGVMRPELVMKS. Residues 57-77 form a helical membrane-spanning segment; that stretch reads IVPVVMAGVLGIYGLIIAVII. Topologically, residues 78–96 are lumenal; the sequence is STGINPKAKSYYLFDGYAH. The helical transmembrane segment at 97 to 118 threads the bilayer; that stretch reads LSSGLACGLAGLSAGMAIGIVG. Residues 119–130 lie on the Cytoplasmic side of the membrane; the sequence is DAGVRANAQQPK. The chain crosses the membrane as a helical span at residues 131 to 156; it reads LFVGMILILIFAEALALYGLIVGIIL. Residues 157–166 lie on the Lumenal side of the membrane; that stretch reads SSRAGQSRAE.

It belongs to the V-ATPase proteolipid subunit family. As to quaternary structure, V-ATPase is a heteromultimeric enzyme composed of a peripheral catalytic V1 complex (components A to H) attached to an integral membrane V0 proton pore complex (components: a, c, c'', d and e). The proteolipid components c and c'' are present as a hexameric ring that forms the proton-conducting pore. Interacts with APD2.

Its subcellular location is the vacuole membrane. Proton-conducting pore forming subunit of the membrane integral V0 complex of vacuolar ATPase. V-ATPase is responsible for acidifying a variety of intracellular compartments in eukaryotic cells. This chain is V-type proton ATPase subunit c4 (VHA-c4), found in Arabidopsis thaliana (Mouse-ear cress).